Consider the following 148-residue polypeptide: Aspartate carbamoyltransferase regulatory chain (148 aa).

Positions 106, 111, 134, and 137 each coordinate Zn(2+).

Belongs to the PyrI family. As to quaternary structure, contains catalytic and regulatory chains. Requires Zn(2+) as cofactor.

In terms of biological role, involved in allosteric regulation of aspartate carbamoyltransferase. The sequence is that of Aspartate carbamoyltransferase regulatory chain from Methanococcus maripaludis (strain DSM 14266 / JCM 13030 / NBRC 101832 / S2 / LL).